We begin with the raw amino-acid sequence, 233 residues long: Protease inhibitor Egf1.0 (233 aa).

The first 28 residues, 1–28 (MYIDTGIMSNNIFLFAFFALVGLTRIEA), serve as a signal peptide directing secretion. The 53-residue stretch at 52 to 104 (CRENEHYNSTRIECEEECNDRNNKLCYRFQQFCWCNEGYIRNSSHICVKLEDC) folds into the TIL domain. The disordered stretch occupies residues 201-233 (FGKPKNSSAEKKPLETETQAQKFNGIIDQETLD).

It belongs to the polydnaviridae EGF-like motif protein family. Interacts with host PAP1 and PAP3.

In terms of biological role, counteracts the host humoral immune response by inhibiting the processing and the amidolytic activity of host PAP3. Thereby, melanization of host hemolymph, normally producing several reactive intermediates toxic for viruses, is deregulated and proper immune response cannot occur. This is Protease inhibitor Egf1.0 (O12) from Microplitis demolitor (Parasitoid wasp).